A 102-amino-acid polypeptide reads, in one-letter code: MYAVIKTGGKQYKVSEGDLVKIEKIEGAVGDTIELDEVLMVGGEEVKIGTPLLPGAKVTARIVQQGKDKKVLVFHSKRRKGYRKTYGHRQPITRLQITGIEA.

It belongs to the bacterial ribosomal protein bL21 family. As to quaternary structure, part of the 50S ribosomal subunit. Contacts protein L20.

In terms of biological role, this protein binds to 23S rRNA in the presence of protein L20. The polypeptide is Large ribosomal subunit protein bL21 (Syntrophotalea carbinolica (strain DSM 2380 / NBRC 103641 / GraBd1) (Pelobacter carbinolicus)).